The sequence spans 415 residues: Squalene synthase 2 (415 aa).

A run of 2 helical transmembrane segments spans residues 281–301 and 392–412; these read AIFRFCAIPQIMSIGTLALCY and LIVILFIILAILYAYLSSNLP.

This sequence belongs to the phytoene/squalene synthase family. Mg(2+) is required as a cofactor. It depends on Mn(2+) as a cofactor.

The protein localises to the endoplasmic reticulum membrane. It catalyses the reaction 2 (2E,6E)-farnesyl diphosphate + NADH + H(+) = squalene + 2 diphosphate + NAD(+). It carries out the reaction 2 (2E,6E)-farnesyl diphosphate + NADPH + H(+) = squalene + 2 diphosphate + NADP(+). It functions in the pathway terpene metabolism; lanosterol biosynthesis; lanosterol from farnesyl diphosphate: step 1/3. Its function is as follows. Component of the triterpene saponins (e.g. ginsenosides or panaxosides) and phytosterols biosynthetic pathways. Catalyzes the biosynthesis of squalene. The sequence is that of Squalene synthase 2 from Panax ginseng (Korean ginseng).